The primary structure comprises 345 residues: Peptidoglycan-recognition protein LE (345 aa).

Over residues 1 to 16 (MSESGIKKLSQERTRE) the composition is skewed to basic and acidic residues. Positions 1-38 (MSESGIKKLSQERTREWLASQEDEELESIAESSVVDSL) are disordered. N-linked (GlcNAc...) asparagine glycosylation is found at N52, N95, N98, and N106. The interval 124–152 (NRRDRRHVSPPRDNAPKTPTHFEDDYQDE) is disordered. Positions 198–324 (PVKYVVILHT…CQCNSTESPG (127 aa)) constitute an N-acetylmuramoyl-L-alanine amidase domain. Peptidoglycan-binding positions include H206, 229–240 (HIESRGWNDIAY), R254, 261–267 (AHTLGYN), and 314–322 (HCQCNSTES). N-linked (GlcNAc...) asparagine glycosylation occurs at N318.

Belongs to the N-acetylmuramoyl-L-alanine amidase 2 family. Monomer. Peptidoglycan binding induces oligomerization. As to expression, expressed in hemolymph. Localizes at the lumenal surface of the trachea (at protein level).

The protein localises to the secreted. Functionally, peptidoglycan-recognition protein that plays a key role in innate immunity by binding to murein peptidoglycans (PGN) of Gram-negative bacteria and activating the imd/Relish pathway. Has no activity against on Gram-positive bacteria. Binds to diaminopimelic acid-type PGN (DAP-type PGN), an activator of the imd/Relish pathway. Functions synergistically with PGRP-LC in producing resistance to E.coli and B.megaterium infections, which have the DAP-type peptidoglycan. Acts both upstream and in parallel with PGRP-LC in the imd/Relish pathway, and is required for infection-dependent activation of melanization. Required for Relish processing and nuclear translocation following proteolytic cleavage. Its localization suggests a role in the recognition and subsequent activation of the signaling at the first point of contact with invading bacteria. This Drosophila melanogaster (Fruit fly) protein is Peptidoglycan-recognition protein LE (PGRP-LE).